The chain runs to 554 residues: Carboxypeptidase Y homolog A (554 aa).

The N-terminal stretch at 1 to 17 is a signal peptide; that stretch reads MRIAASTVLFGAASAAS. The propeptide occupies 18–137; sequence FQQQAQHVLS…RLEEYNLRVK (120 aa). Cystine bridges form between Cys191/Cys431, Cys325/Cys339, Cys349/Cys372, Cys356/Cys365, and Cys394/Cys401. A glycan (N-linked (GlcNAc...) asparagine) is linked at Asn222. Residue Ser278 is part of the active site. Asp470 is an active-site residue. Asn518 carries N-linked (GlcNAc...) asparagine glycosylation. His529 is an active-site residue.

It belongs to the peptidase S10 family.

It is found in the vacuole. It catalyses the reaction Release of a C-terminal amino acid with broad specificity.. In terms of biological role, vacuolar carboxypeptidase involved in degradation of small peptides. Digests preferentially peptides containing an aliphatic or hydrophobic residue in P1' position, as well as methionine, leucine or phenylalanine in P1 position of ester substrate. This is Carboxypeptidase Y homolog A (CPYA) from Chaetomium globosum (strain ATCC 6205 / CBS 148.51 / DSM 1962 / NBRC 6347 / NRRL 1970) (Soil fungus).